We begin with the raw amino-acid sequence, 960 residues long: MGLASKRKRDTEEHSDEGEDFDIAGNIALDSEDSDDSVSDSDNEVQDIIEFSDDEKQNAPQVSKTAKGAKGAKVAAPRSDAAFPSLELSDGEDADNGDKDDVDSYFNTTSQLAASKAKKGSFASFGLSKFILGNISRKGFRQPTPIQRKTIPLILQQRDIVGMARTGSGKTAAFVLPLIEKLKMHSAKIGARAMILSPSRELAMQTHKVFKEFAKGSNLRSVLLTGGDGLEDQFSMMMSNPDVIIATPGRFLHLKVEMNLDLHSIEYVVFDEADRLFEMGFQEQLNELLGSLPTARQTLLFSATLPSSLVDFAKAGLTNPVLVRLDTETKVSENLEMLFLSVKNDEREANLLYLLQEVIKIPVATEEQLQRFRKQSNDDADDSDDETDKKKKHSKKSKQPLPSAKDMPSPNSTIIFVSTRHHVEYVSNLLKDCGYLVSYLYGTLDQHARRQQLHNFRCGLTNILVVTDVAARGVDIPLLANVVNMSLPASSKIFVHRVGRTARAGNKGWAYTILSESELPYLLDLELFLGKKVLLTPMYEATCDLLKKKWISEGNEGALFQPPKISYVNRLILGSAPRLDLEAMGDLFKNLVESNFELQNLKAVSIKAEKLYLRTRQPASAESIKRAKEVIAAGWDEQNVRFGKNIEKEKLEFLAKLQNRHNKETVFEFARNHDDEMAILMKRRRRQIAPIQQRAKERQQLLEKERQAGLRHTLEDEILKGEENEVGYSVPQELLRDFEDADELAAKRNTKKGFRDENFYLSHFAPASDIQDKQLQVASSFTNEVSKATFDLHNDDKVQVHKQTATVKWDKKRKKYVNVQGIDNKKYIIGESGQKIPASFRSGKFDEWSKARKLAPLKVGARESSIPANLLADPTGSRLANGKFKHKQIKAPKMPDKNRDDYQSQLKKVNKAMESGLHVKGYNAPGMKQELRTTEQIRKQRSMAEKRKAKNARPAKKRKF.

Residues 1 to 102 (MGLASKRKRD…DADNGDKDDV (102 aa)) form a disordered region. Acidic residues-rich tracts occupy residues 13 to 22 (EHSDEGEDFD) and 30 to 53 (DSED…EFSD). The segment covering 64 to 76 (KTAKGAKGAKVAA) has biased composition (low complexity). The segment covering 89-102 (SDGEDADNGDKDDV) has biased composition (acidic residues). The Q motif motif lies at 120-148 (GSFASFGLSKFILGNISRKGFRQPTPIQR). A Helicase ATP-binding domain is found at 151–323 (IPLILQQRDI…KAGLTNPVLV (173 aa)). Residue 164-171 (ARTGSGKT) participates in ATP binding. A DEAD box motif is present at residues 271–274 (DEAD). 3 disordered regions span residues 370–409 (QRFR…DMPS), 872–903 (ADPT…DDYQ), and 920–960 (KGYN…KRKF). The region spanning 388–546 (DKKKKHSKKS…PMYEATCDLL (159 aa)) is the Helicase C-terminal domain. Composition is skewed to basic and acidic residues over residues 893 to 902 (KMPDKNRDDY) and 929 to 946 (QELR…MAEK). The span at 947-960 (RKAKNARPAKKRKF) shows a compositional bias: basic residues.

Belongs to the DEAD box helicase family. DDX54/DBP10 subfamily.

It is found in the nucleus. The protein localises to the nucleolus. It catalyses the reaction ATP + H2O = ADP + phosphate + H(+). ATP-binding RNA helicase involved in the biogenesis of 60S ribosomal subunits and is required for the normal formation of 25S and 5.8S rRNAs. The sequence is that of ATP-dependent RNA helicase DBP10 (DBP10) from Eremothecium gossypii (strain ATCC 10895 / CBS 109.51 / FGSC 9923 / NRRL Y-1056) (Yeast).